We begin with the raw amino-acid sequence, 570 residues long: Periplasmic trehalase (570 aa).

The first 34 residues, 1-34 (MIPPEIRRSVLLQKAIKLALAGTLLTFASFSATA), serve as a signal peptide directing secretion. Substrate is bound by residues Arg159, 166–167 (WD), Asn203, 212–214 (RSQ), 284–286 (RPE), and Gly317. Catalysis depends on proton donor/acceptor residues Asp319 and Glu503. Position 518 (Glu518) interacts with substrate. The disordered stretch occupies residues 544–570 (KPCDSVPSTRPASLSATPTKTPSAATQ). Positions 554-570 (PASLSATPTKTPSAATQ) are enriched in low complexity.

The protein belongs to the glycosyl hydrolase 37 family. As to quaternary structure, monomer.

It localises to the periplasm. The catalysed reaction is alpha,alpha-trehalose + H2O = alpha-D-glucose + beta-D-glucose. Provides the cells with the ability to utilize trehalose at high osmolarity by splitting it into glucose molecules that can subsequently be taken up by the phosphotransferase-mediated uptake system. This chain is Periplasmic trehalase, found in Salmonella schwarzengrund (strain CVM19633).